Reading from the N-terminus, the 76-residue chain is Anaredoxin (76 aa).

The region spanning 24–66 (CMVCWEVNSKANGHHLIPYSEGGSADIQNMMTLCPSCHTKYHK) is the HNH domain.

It belongs to the HNH nuclease family.

Putative P-450 reductase. The chain is Anaredoxin from Nostoc sp. (strain PCC 7120 / SAG 25.82 / UTEX 2576).